The primary structure comprises 341 residues: tRNA N6-adenosine threonylcarbamoyltransferase (341 aa).

Positions 111 and 115 each coordinate Fe cation. Residues 134–138 (LVSGG), Asp167, Gly180, and Asn276 each bind substrate. A Fe cation-binding site is contributed by Asp304.

The protein belongs to the KAE1 / TsaD family. Fe(2+) is required as a cofactor.

The protein resides in the cytoplasm. The enzyme catalyses L-threonylcarbamoyladenylate + adenosine(37) in tRNA = N(6)-L-threonylcarbamoyladenosine(37) in tRNA + AMP + H(+). In terms of biological role, required for the formation of a threonylcarbamoyl group on adenosine at position 37 (t(6)A37) in tRNAs that read codons beginning with adenine. Is involved in the transfer of the threonylcarbamoyl moiety of threonylcarbamoyl-AMP (TC-AMP) to the N6 group of A37, together with TsaE and TsaB. TsaD likely plays a direct catalytic role in this reaction. The polypeptide is tRNA N6-adenosine threonylcarbamoyltransferase (Pseudomonas putida (strain ATCC 47054 / DSM 6125 / CFBP 8728 / NCIMB 11950 / KT2440)).